The sequence spans 238 residues: Probable transcriptional regulatory protein YeeN (238 aa).

Belongs to the TACO1 family. YeeN subfamily.

The protein resides in the cytoplasm. This Salmonella typhimurium (strain LT2 / SGSC1412 / ATCC 700720) protein is Probable transcriptional regulatory protein YeeN.